The following is a 1006-amino-acid chain: Zinc finger protein ZFPM1 (1006 aa).

The span at 1-13 shows a compositional bias: basic residues; it reads MSRRKQSNPRQIK. Disordered stretches follow at residues 1-93 and 114-133; these read MSRR…DELE and SWGPFHGSVQTRASSPRQAE. A compositionally biased stretch (basic and acidic residues) spans 15 to 25; the sequence is SLGDMEAREEV. Residues 42-62 are compositionally biased toward pro residues; sequence APSPPSADVNSPPPLPPPTSP. Residues 66 to 79 are compositionally biased toward basic and acidic residues; sequence KELEGQEPEPRPTE. 2 positions are modified to phosphoserine: S84 and S128. Residues 121 to 130 are compositionally biased toward polar residues; sequence SVQTRASSPR. A CCHC FOG-type 1 zinc finger spans residues 235–268; that stretch reads VINKDVFPCKDCGIWYRSERNLQAHLLYYCASRQ. Residues C243, C246, H259, and C264 each contribute to the Zn(2+) site. S272 carries the post-translational modification Phosphoserine. C2H2-type zinc fingers lie at residues 290–314, 320–342, and 348–371; these read RVCPFPQCRKSCPSASSLEIHMRSH, FVCLICLSAFTTKANCERHLKVH, and GVCHSCGFISTTRDILYSHLVTNH. The interaction with TACC3 stretch occupies residues 330-341; the sequence is TTKANCERHLKV. Residue S384 is modified to Phosphoserine. Disordered stretches follow at residues 384–409, 438–460, and 473–515; these read SPGAGHPATKLPPDSLGSFQQQHTAL, NGEARAEPLAQNGGSSEPPAAPR, and APIL…SPVP. Residues 485–515 show a composition bias toward low complexity; sequence APSRTPSPRSPAPARVKAELSSPTPGSSPVP. S491 and S494 each carry phosphoserine. A CCHC FOG-type 2 zinc finger spans residues 571–604; that stretch reads PGAPKGATCFECEITFSNVNNYYVHKRLYCSGRR. Zn(2+) contacts are provided by C579, C582, H595, and C600. The tract at residues 605 to 681 is disordered; the sequence is APEDAPAARR…SVDDAEDDPS (77 aa). Over residues 617–629 the composition is skewed to pro residues; sequence APPGPARAPPGQP. S638 and S671 each carry phosphoserine. The CCHC FOG-type 3 zinc-finger motif lies at 677–710; it reads EDDPSRTLCEACNIRFSRHETYTVHKRYYCASRH. Positions 685, 688, 701, and 706 each coordinate Zn(2+). The tract at residues 708-810 is disordered; that stretch reads SRHDPPPRRP…PRRPLPGAPA (103 aa). Pro residues-rich tracts occupy residues 715–735 and 754–769; these read RRPAAPPGPPGPAAPPAPSPA and APPPPPPGHAPAPESP. Residues 780–791 are compositionally biased toward low complexity; that stretch reads GLAPARSPGPAA. S786 is modified (phosphoserine). An interaction with CTBP2 region spans residues 794–800; the sequence is PIDLSKK. A CCHC FOG-type 4 zinc finger spans residues 811–844; sequence PALADYHECTACRVSFHSLEAYLAHKKYSCPAAP. Zn(2+) is bound by residues C819, C822, H835, and C840. Residues 854–877 form a C2H2-type 4 zinc finger; sequence AACPYCPPNGPVRGDLLEHFRLAH. Residues 889–971 form a disordered region; that stretch reads GVEARTPADR…KGTPAPLPNG (83 aa). Phosphoserine occurs at positions 901, 909, 914, and 935. Pro residues predominate over residues 925 to 950; sequence PQEPPPGPPPSPAAAPEAVPPPPAPP. A CCHC FOG-type 5 zinc finger spans residues 968-1001; the sequence is LPNGNHRYCRLCNIKFSSLSTFIAHKKYYCSSHA. Residues C976, C979, H992, and C997 each contribute to the Zn(2+) site.

This sequence belongs to the FOG (Friend of GATA) family. In terms of assembly, interacts with corepressor CTBP2; this interaction is however not essential for corepressor activity. Interacts with the N-terminal zinc-finger of GATA1, GATA2 and probably GATA3. In terms of tissue distribution, mainly expressed in hematopoietic tissues. Also expressed in adult cerebellum, stomach, lymph node, liver and pancreas. Expressed in fetal heart, liver and spleen.

Its subcellular location is the nucleus. Functionally, transcription regulator that plays an essential role in erythroid and megakaryocytic cell differentiation. Essential cofactor that acts via the formation of a heterodimer with transcription factors of the GATA family GATA1, GATA2 and GATA3. Such heterodimer can both activate or repress transcriptional activity, depending on the cell and promoter context. The heterodimer formed with GATA proteins is essential to activate expression of genes such as NFE2, ITGA2B, alpha- and beta-globin, while it represses expression of KLF1. May be involved in regulation of some genes in gonads. May also be involved in cardiac development, in a non-redundant way with ZFPM2/FOG2. This is Zinc finger protein ZFPM1 (ZFPM1) from Homo sapiens (Human).